Here is a 423-residue protein sequence, read N- to C-terminus: Transcription factor AP-2-epsilon (423 aa).

The disordered stretch occupies residues 1–108 (MLVHSYSSME…EDAGLLSQPH (108 aa)). A compositionally biased stretch (low complexity) spans 14–27 (GLSSSSPGGRLSQL). The PPxY motif motif lies at 50-55 (YFPPPY). A compositionally biased stretch (low complexity) spans 57 to 70 (QSSLSYSQSQDGGY). Over residues 79–93 (SLNSLHQHQQAAWHS) the composition is skewed to polar residues. Positions 276-405 (RRKAANVTLL…YLLEALKLLD (130 aa)) are H-S-H (helix-span-helix), dimerization.

This sequence belongs to the AP-2 family. As to quaternary structure, binds DNA as a dimer. Can form homodimers or heterodimers with other AP-2 family members.

It localises to the nucleus. Functionally, sequence-specific DNA-binding protein that interacts with inducible viral and cellular enhancer elements to regulate transcription of selected genes. AP-2 factors bind to the consensus sequence 5'-GCCNNNGGC-3' and activate genes involved in a large spectrum of important biological functions. The chain is Transcription factor AP-2-epsilon from Danio rerio (Zebrafish).